The primary structure comprises 329 residues: UPF0421 protein SH1063 (329 aa).

Helical transmembrane passes span 25-45, 60-80, 87-107, 108-128, and 131-151; these read LFCL…IVTI, LPAT…FGDP, FSAL…GTTV, AVLT…FNFF, and LLTA…VLPP.

It belongs to the UPF0421 family.

The protein localises to the cell membrane. This Staphylococcus haemolyticus (strain JCSC1435) protein is UPF0421 protein SH1063.